The primary structure comprises 163 residues: Antimicrobial peptide 2 (163 aa).

An N-terminal signal peptide occupies residues 1–22; that stretch reads MLNMKSFALLMLFATLVGVTIA. 2 consecutive Chitin-binding type-1 domains span residues 26–66 and 69–107; these read NGKC…EIEP and AGQCYRGRCSGGLCCSKYGYCGSGPAYCGLGMCQGSCLP. 3 disulfide bridges follow: Cys-29/Cys-42, Cys-36/Cys-48, and Cys-41/Cys-55. Residues 58 to 67 constitute a propeptide that is removed on maturation; the sequence is NTPLSEIEPT. 4 disulfide bridges follow: Cys-72–Cys-83, Cys-77–Cys-89, Cys-82–Cys-96, and Cys-101–Cys-105. Positions 100–163 are excised as a propeptide; that stretch reads MCQGSCLPDM…QVEPAVTKAP (64 aa).

In terms of tissue distribution, expressed in roots, flowers, stem and leaves.

In terms of biological role, antimicrobial peptide. This chain is Antimicrobial peptide 2, found in Stellaria media (Common chickweed).